We begin with the raw amino-acid sequence, 428 residues long: Kynureninase (428 aa).

Residues Thr104, Thr105, 132 to 135, Asp213, His216, and Tyr238 each bind pyridoxal 5'-phosphate; that span reads FPSD. Lys239 is subject to N6-(pyridoxal phosphate)lysine. 2 residues coordinate pyridoxal 5'-phosphate: Trp267 and Thr295.

The protein belongs to the kynureninase family. In terms of assembly, homodimer. The cofactor is pyridoxal 5'-phosphate.

The enzyme catalyses L-kynurenine + H2O = anthranilate + L-alanine + H(+). It catalyses the reaction 3-hydroxy-L-kynurenine + H2O = 3-hydroxyanthranilate + L-alanine + H(+). The protein operates within amino-acid degradation; L-kynurenine degradation; L-alanine and anthranilate from L-kynurenine: step 1/1. It participates in cofactor biosynthesis; NAD(+) biosynthesis; quinolinate from L-kynurenine: step 2/3. Catalyzes the cleavage of L-kynurenine (L-Kyn) and L-3-hydroxykynurenine (L-3OHKyn) into anthranilic acid (AA) and 3-hydroxyanthranilic acid (3-OHAA), respectively. This Bacillus anthracis protein is Kynureninase.